A 798-amino-acid chain; its full sequence is uncharacterized protein (798 aa).

Residues 432–573 are disordered; it reads KLTDNLSNKS…KNKAYRGRRV (142 aa). Composition is skewed to low complexity over residues 438–449, 456–465, 473–487, and 495–510; these read SNKSSNDNTSET, RSSNSRNSDN, SKTQ…SRIP, and STNS…SDVY. Residues 519–529 are compositionally biased toward polar residues; it reads PSRSTYKSRTI. Positions 535–547 are enriched in low complexity; the sequence is ESSPVSSRTSSPV. Positions 548 to 562 are enriched in basic and acidic residues; that stretch reads DDSRLKQSRISEDKP. Over residues 563–572 the composition is skewed to basic residues; sequence RKNKAYRGRR.

Its subcellular location is the virion. This is an uncharacterized protein from Acanthamoeba polyphaga (Amoeba).